The primary structure comprises 251 residues: MASRDDLVYMAKLAEQAERFDEMVDHMKAVAQQPKELSVEERNLLSVAYKNVIGSRRASWRVISSIEGKDTVSDQLPLIRDYKSKIETELTDICADILKIIEAELIPNSTSEEGKVFYYKMKGDYHRYLAEFQSADERKTSASDALDAYQLASDHANQDLPPTHPIRLGLALNFSVFYYEILNSPDRACGLAKAAFDDAIAELDTLSEESYKDSTLIIMQLLRDNLTLWTSDQGEAEEAPGNADGTVVEDL.

The protein belongs to the 14-3-3 family.

In Fucus vesiculosus (Bladder wrack), this protein is 14-3-3-like protein.